A 493-amino-acid chain; its full sequence is Inosine-5'-monophosphate dehydrogenase (493 aa).

CBS domains are found at residues 97-155 and 159-219; these read VIID…NAPI and MTSE…AKDE. NAD(+)-binding positions include Asp-253 and 303–305; that span reads GIG. Gly-305 and Gly-307 together coordinate K(+). An IMP-binding site is contributed by Ser-308. Cys-310 contacts K(+). Residue Cys-310 is the Thioimidate intermediate of the active site. IMP contacts are provided by residues 343–345, 366–367, and 390–394; these read DGG, GS, and YRGMG. Residue Arg-406 is the Proton acceptor of the active site. Glu-421 is an IMP binding site. K(+) is bound by residues Glu-475, Ser-476, and His-477.

It belongs to the IMPDH/GMPR family. In terms of assembly, homotetramer. Requires K(+) as cofactor.

It carries out the reaction IMP + NAD(+) + H2O = XMP + NADH + H(+). It participates in purine metabolism; XMP biosynthesis via de novo pathway; XMP from IMP: step 1/1. Its activity is regulated as follows. Mycophenolic acid (MPA) is a non-competitive inhibitor that prevents formation of the closed enzyme conformation by binding to the same site as the amobile flap. In contrast, mizoribine monophosphate (MZP) is a competitive inhibitor that induces the closed conformation. MPA is a potent inhibitor of mammalian IMPDHs but a poor inhibitor of the bacterial enzymes. MZP is a more potent inhibitor of bacterial IMPDH. Catalyzes the conversion of inosine 5'-phosphate (IMP) to xanthosine 5'-phosphate (XMP), the first committed and rate-limiting step in the de novo synthesis of guanine nucleotides, and therefore plays an important role in the regulation of cell growth. This Streptococcus pyogenes serotype M1 protein is Inosine-5'-monophosphate dehydrogenase.